A 37-amino-acid chain; its full sequence is U1-ectatotoxin-Eb1a subunit B (37 aa).

The protein belongs to the ectatomin family. Ectatomin-Eq subfamily. In terms of assembly, heterodimer of subunits A and B; disulfide-linked. As to expression, expressed by the venom gland.

Its subcellular location is the secreted. It is found in the target cell membrane. In Ectatomma brunneum (Ant), this protein is U1-ectatotoxin-Eb1a subunit B.